A 194-amino-acid chain; its full sequence is MRKWILTWILPSLLYRSCFHIICLVGTISLACNDMTPEQMATNVNCSSPERHTRSYDYMEGGDIRVRRLFCRTQWYLRIDKRGKVKGTQEMKNNYNIMEIRTVAVGIVAIKGVESEYYLAMNKEGKLYAKKECNEDCNFKELILENHYNTYASAKWTHSGGEMFVALNSKGVPVRGKKTKKEQKTAHFLPMAIT.

The N-terminal stretch at Met1–Ala31 is a signal peptide. N-linked (GlcNAc...) asparagine glycosylation is present at Asn45.

It belongs to the heparin-binding growth factors family. As to quaternary structure, interacts with FGFBP1. Interacts with FGFR2. Affinity between fibroblast growth factors (FGFs) and their receptors is increased by heparan sulfate glycosaminoglycans that function as coreceptors.

Plays an important role in the regulation of embryonic development, cell proliferation and cell differentiation. Required for normal branching morphogenesis. Growth factor active on keratinocytes. Possible major paracrine effector of normal epithelial cell proliferation. This Ovis aries (Sheep) protein is Fibroblast growth factor 7 (FGF7).